The sequence spans 278 residues: Adenosylcobinamide-GDP ribazoletransferase (278 aa).

6 consecutive transmembrane segments (helical) span residues 44–64, 69–89, 121–141, 161–181, 204–224, and 227–247; these read GIGVVVGGAAAAMFALLQLLL, FTPLVAAAFSTVATVWLTGGF, AFGAMALVLALLCKVALLALL, VCAALWTGHIVSRGLPLVMIW, GGLAIAFSWCFGALALASLAL, and INLIVACGFSVLALLGLLRFF.

Belongs to the CobS family. It depends on Mg(2+) as a cofactor.

It is found in the cell inner membrane. The catalysed reaction is alpha-ribazole + adenosylcob(III)inamide-GDP = adenosylcob(III)alamin + GMP + H(+). It catalyses the reaction alpha-ribazole 5'-phosphate + adenosylcob(III)inamide-GDP = adenosylcob(III)alamin 5'-phosphate + GMP + H(+). It participates in cofactor biosynthesis; adenosylcobalamin biosynthesis; adenosylcobalamin from cob(II)yrinate a,c-diamide: step 7/7. Joins adenosylcobinamide-GDP and alpha-ribazole to generate adenosylcobalamin (Ado-cobalamin). Also synthesizes adenosylcobalamin 5'-phosphate from adenosylcobinamide-GDP and alpha-ribazole 5'-phosphate. The polypeptide is Adenosylcobinamide-GDP ribazoletransferase (Polaromonas naphthalenivorans (strain CJ2)).